A 42-amino-acid polypeptide reads, in one-letter code: Photosystem I reaction center subunit IX (42 aa).

A helical transmembrane segment spans residues 8–28 (YLSTIPVVGAIWLTFTAGFII).

It belongs to the PsaJ family.

The protein localises to the plastid. The protein resides in the chloroplast thylakoid membrane. In terms of biological role, may help in the organization of the PsaE and PsaF subunits. The chain is Photosystem I reaction center subunit IX from Gracilaria tenuistipitata var. liui (Red alga).